The following is a 388-amino-acid chain: Myosin light chain kinase family member 4 (388 aa).

The 256-residue stretch at 106–361 (VSKTEILGGG…ASEALKHPWL (256 aa)) folds into the Protein kinase domain. Residues 112–120 (LGGGRFGQV) and Lys135 each bind ATP. Asp227 acts as the Proton acceptor in catalysis.

The protein belongs to the protein kinase superfamily. CAMK Ser/Thr protein kinase family.

The enzyme catalyses L-seryl-[protein] + ATP = O-phospho-L-seryl-[protein] + ADP + H(+). It carries out the reaction L-threonyl-[protein] + ATP = O-phospho-L-threonyl-[protein] + ADP + H(+). This chain is Myosin light chain kinase family member 4 (MYLK4), found in Homo sapiens (Human).